Reading from the N-terminus, the 497-residue chain is Argininosuccinate lyase (497 aa).

The protein belongs to the lyase 1 family. Argininosuccinate lyase subfamily.

The protein localises to the cytoplasm. It carries out the reaction 2-(N(omega)-L-arginino)succinate = fumarate + L-arginine. It participates in amino-acid biosynthesis; L-arginine biosynthesis; L-arginine from L-ornithine and carbamoyl phosphate: step 3/3. This Clavibacter michiganensis subsp. michiganensis (strain NCPPB 382) protein is Argininosuccinate lyase.